Reading from the N-terminus, the 324-residue chain is NADH-ubiquinone oxidoreductase chain 1 (324 aa).

A run of 8 helical transmembrane segments spans residues 9-29, 75-95, 106-126, 146-166, 177-197, 228-248, 259-279, and 299-319; these read LINP…LTLI, FLFL…WAPM, LGIL…LGSG, ISYE…SGGY, SIWL…STLA, LFFL…AVLF, ELTT…FLWV, and FLPL…ALAG.

It belongs to the complex I subunit 1 family.

The protein localises to the mitochondrion inner membrane. The enzyme catalyses a ubiquinone + NADH + 5 H(+)(in) = a ubiquinol + NAD(+) + 4 H(+)(out). Its function is as follows. Core subunit of the mitochondrial membrane respiratory chain NADH dehydrogenase (Complex I) that is believed to belong to the minimal assembly required for catalysis. Complex I functions in the transfer of electrons from NADH to the respiratory chain. The immediate electron acceptor for the enzyme is believed to be ubiquinone. The protein is NADH-ubiquinone oxidoreductase chain 1 (MT-ND1) of Carassius auratus (Goldfish).